The sequence spans 260 residues: Phosphate import ATP-binding protein PstB (260 aa).

Positions 14–255 (IETENLNLFY…PKNTKTEEYI (242 aa)) constitute an ABC transporter domain. 46 to 53 (GPSGCGKS) lines the ATP pocket.

The protein belongs to the ABC transporter superfamily. Phosphate importer (TC 3.A.1.7) family. As to quaternary structure, the complex is composed of two ATP-binding proteins (PstB), two transmembrane proteins (PstC and PstA) and a solute-binding protein (PstS).

The protein resides in the cell inner membrane. The enzyme catalyses phosphate(out) + ATP + H2O = ADP + 2 phosphate(in) + H(+). In terms of biological role, part of the ABC transporter complex PstSACB involved in phosphate import. Responsible for energy coupling to the transport system. This is Phosphate import ATP-binding protein PstB from Borreliella burgdorferi (strain ATCC 35210 / DSM 4680 / CIP 102532 / B31) (Borrelia burgdorferi).